The primary structure comprises 182 residues: Constitutive photomorphogenesis protein 10 (182 aa).

Residues 36 to 182 form the UBC core domain; that stretch reads ASGKRIQREM…AKEWTLRFAK (147 aa).

It belongs to the ubiquitin-conjugating enzyme family. In terms of assembly, component of the CDD complex, at least composed of COP10, DET1 and DDB1A. Interacts with E3 ubiquitin ligase COP1. Interacts with E2 ubiquitin conjugating UBC5. Interacts with CSN3, CSN4 and CSN8 subunits of the COP9 complex. As to expression, expressed in flower, leaf, stem and seedling. Expressed at lower level in root.

It is found in the nucleus. In terms of biological role, component of light signal transduction machinery. Involved in repression of photomorphogenesis in darkness by participating in the CDD complex, a complex probably required to regulate the activity of ubiquitin conjugating enzymes (E2s). Repression of photomorphogenesis is probably mediated by ubiquitination and subsequent degradation of photomorphogenesis-promoting factors such as HY5, HYH and LAF1. Although strongly related to ubiquitin-conjugating enzyme, it has no catalytic activity by itself due to the absence of the conserved Cys active site at position 120. It can however enhance the activity of E2 conjugating enzymes. This chain is Constitutive photomorphogenesis protein 10 (COP10), found in Arabidopsis thaliana (Mouse-ear cress).